Here is a 137-residue protein sequence, read N- to C-terminus: Thionin-like protein 1 (137 aa).

Residues 1 to 23 (MEDKRVAMLVVMMLVMGNMLIEA) form the signal peptide.

The protein belongs to the plant thionin (TC 1.C.44) family. Is disulfide-linked.

It is found in the secreted. Its function is as follows. May be involved in plant defense. The polypeptide is Thionin-like protein 1 (Arabidopsis thaliana (Mouse-ear cress)).